The chain runs to 211 residues: Histidine biosynthesis bifunctional protein HisIE (211 aa).

Positions 1–118 (MNVDDLTFDD…IYGASDRFGI (118 aa)) are phosphoribosyl-AMP cyclohydrolase. Residues 119-211 (IATLEALIAE…LEERHRPKEE (93 aa)) are phosphoribosyl-ATP pyrophosphohydrolase.

It in the N-terminal section; belongs to the PRA-CH family. In the C-terminal section; belongs to the PRA-PH family.

It is found in the cytoplasm. It catalyses the reaction 1-(5-phospho-beta-D-ribosyl)-ATP + H2O = 1-(5-phospho-beta-D-ribosyl)-5'-AMP + diphosphate + H(+). It carries out the reaction 1-(5-phospho-beta-D-ribosyl)-5'-AMP + H2O = 1-(5-phospho-beta-D-ribosyl)-5-[(5-phospho-beta-D-ribosylamino)methylideneamino]imidazole-4-carboxamide. Its pathway is amino-acid biosynthesis; L-histidine biosynthesis; L-histidine from 5-phospho-alpha-D-ribose 1-diphosphate: step 2/9. The protein operates within amino-acid biosynthesis; L-histidine biosynthesis; L-histidine from 5-phospho-alpha-D-ribose 1-diphosphate: step 3/9. The protein is Histidine biosynthesis bifunctional protein HisIE (hisI) of Halalkalibacterium halodurans (strain ATCC BAA-125 / DSM 18197 / FERM 7344 / JCM 9153 / C-125) (Bacillus halodurans).